The primary structure comprises 415 residues: Carbamoyl phosphate synthase arginine-specific small chain (415 aa).

Residues 1 to 17 (MLRFLKPFPLRFGKRFY) constitute a mitochondrion transit peptide. Residues serine 88, glycine 272, and glycine 274 each coordinate L-glutamine. Residues 225 to 412 (NIAVIDCGVK…IKEAIKYQKS (188 aa)) enclose the Glutamine amidotransferase type-1 domain. Cysteine 301 serves as the catalytic Nucleophile. Residues methionine 302, glutamine 305, asparagine 343, glycine 345, and tyrosine 346 each coordinate L-glutamine. Residues histidine 385 and glutamate 387 contribute to the active site.

Belongs to the CarA family. In terms of assembly, heterodimer composed of 2 chains; the small (or glutamine) chain promotes the hydrolysis of glutamine to ammonia, which is used by the large (or ammonia) chain to synthesize carbamoyl phosphate.

The protein localises to the mitochondrion. Its subcellular location is the cytoplasm. The enzyme catalyses hydrogencarbonate + L-glutamine + 2 ATP + H2O = carbamoyl phosphate + L-glutamate + 2 ADP + phosphate + 2 H(+). It carries out the reaction L-glutamine + H2O = L-glutamate + NH4(+). It functions in the pathway amino-acid biosynthesis; L-arginine biosynthesis; carbamoyl phosphate from bicarbonate: step 1/1. Functionally, small subunit of the arginine-specific carbamoyl phosphate synthase (CPSase). CPSase catalyzes the formation of carbamoyl phosphate from the ammonia moiety of glutamine, carbonate, and phosphate donated by ATP, the first step of the arginine biosynthetic pathway. The small subunit (glutamine amidotransferase) binds and cleaves glutamine to supply the large subunit with the substrate ammonia. This chain is Carbamoyl phosphate synthase arginine-specific small chain (arg5), found in Schizosaccharomyces pombe (strain 972 / ATCC 24843) (Fission yeast).